A 212-amino-acid polypeptide reads, in one-letter code: Thymidylate kinase (212 aa).

Residue 13–20 (GLEGAGKS) participates in ATP binding.

Belongs to the thymidylate kinase family.

It carries out the reaction dTMP + ATP = dTDP + ADP. Phosphorylation of dTMP to form dTDP in both de novo and salvage pathways of dTTP synthesis. This chain is Thymidylate kinase, found in Legionella pneumophila (strain Paris).